The following is a 788-amino-acid chain: Cadherin-related family member 4 (788 aa).

Positions 1-16 are cleaved as a signal peptide; the sequence is MVLLRLLVFLFAPVVS. Residues 17–686 are Extracellular-facing; the sequence is DLCSLPCFIN…DTEAFWQPQP (670 aa). Cadherin domains are found at residues 237–338, 339–449, 444–554, and 551–674; these read LEQA…PPRC, LPAL…APRT, ACAP…EPPF, and EPPF…TPML. The N-linked (GlcNAc...) asparagine glycan is linked to Asn242. A helical membrane pass occupies residues 687 to 707; it reads WFVVVLTATGALLLLALGWLL. The Cytoplasmic segment spans residues 708–788; that stretch reads GRLLQGLAQL…NTHTGARRWL (81 aa).

It is found in the membrane. Functionally, cadherins are calcium-dependent cell adhesion proteins. They preferentially interact with themselves in a homophilic manner in connecting cells; cadherins may thus contribute to the sorting of heterogeneous cell types. The sequence is that of Cadherin-related family member 4 (CDHR4) from Homo sapiens (Human).